The following is a 638-amino-acid chain: MVTIVEVKQHIKKFAAGNELYLQEVLGCHYENDIYTFRVWAPNAQKVWLVGDFNDWDKSLEMSQTLDGVWEIKTSLPKEGQLYKFLVKQADGREVMKIDPMAFELEPRPGSAAVIVKLPNKKWLDGAWMGRNKRSNHFARPINIYEVHASSWKRHTDGSLYTLKDLQKELIPYVKEQGFNYIEFLPLTAHPLDASWGYQTIGYYALERTYGTPRELQDFVEACHKENIGVLADWVPGHFCINDDALAYYDGTPCYEFSEKWRAENKGWGALNFDLGKPEVQSFLLSSALFWLEFYHLDGLRVDAVSNMIYRDYDRSDGEWKTDKFGGNRNLEGIEFLQKLNRTIKGKHPECLMIAEESSAQVKITGRIEDGGLGFDFKWNMGWMNDILRFYEMDPLFRKFNFNLATFSFMYRMSENFILPLSHDEVVHGKRSLMNKMFGDRDKQFAQLRNLLTLQMTYPGKKLLFMGSEFGQYLEWRYNDGLDWAELKDELNAKMKHFDQDLNSFYLNEPALWQLEQREDSVQIIDADNKDESVLSFIRQGKTRHDFLIVILNFTPVDRKKITIGVPYAGKYCEVFNSARKEYGGSWNQEKQNLKTQNNSFKNFNYQVQLDIPGFSAVILKPVDVHIKRRINRKTKTK.

The active-site Nucleophile is the D303. E356 (proton donor) is an active-site residue.

The protein belongs to the glycosyl hydrolase 13 family. GlgB subfamily. As to quaternary structure, monomer.

The catalysed reaction is Transfers a segment of a (1-&gt;4)-alpha-D-glucan chain to a primary hydroxy group in a similar glucan chain.. It participates in glycan biosynthesis; glycogen biosynthesis. Functionally, catalyzes the formation of the alpha-1,6-glucosidic linkages in glycogen by scission of a 1,4-alpha-linked oligosaccharide from growing alpha-1,4-glucan chains and the subsequent attachment of the oligosaccharide to the alpha-1,6 position. This is 1,4-alpha-glucan branching enzyme GlgB from Lactobacillus acidophilus (strain ATCC 700396 / NCK56 / N2 / NCFM).